The primary structure comprises 360 residues: uncharacterized protein (360 aa).

7 helical membrane-spanning segments follow: residues 26–48 (SVCY…SGAT), 58–80 (LHPL…ASVL), 89–111 (VMGL…NIAH), 126–148 (LSTG…SILA), 169–191 (RLAY…PTAL), 195–214 (IPSV…YALL), and 227–249 (CALC…SHMV).

The protein localises to the cell membrane. This is an uncharacterized protein from Treponema pallidum (strain Nichols).